The following is a 399-amino-acid chain: Leu/Ile/Val-binding protein homolog 7 (399 aa).

The N-terminal stretch at 1 to 22 is a signal peptide; the sequence is MEKHLIALSVAALLAGAAPASA.

Belongs to the leucine-binding protein family.

Its function is as follows. Component of an amino-acid transport system. The chain is Leu/Ile/Val-binding protein homolog 7 from Brucella suis biovar 1 (strain 1330).